Consider the following 62-residue polypeptide: Beta-defensin 10 (62 aa).

The N-terminal stretch at 1 to 22 (MRLHHLLLLLLLVVLSSGSGFT) is a signal peptide. Position 23 is a pyrrolidone carboxylic acid (Gln23). Cystine bridges form between Cys31/Cys60, Cys38/Cys53, and Cys43/Cys61.

It belongs to the beta-defensin family. Neutrophilic granules.

The protein resides in the secreted. Has bactericidal activity. Active against E.coli ML35 and S.aureus 502A. This is Beta-defensin 10 (DEFB10) from Bos taurus (Bovine).